Here is a 155-residue protein sequence, read N- to C-terminus: Xanthine-guanine phosphoribosyltransferase (155 aa).

Residues 37-38 (RG), arginine 69, and 90-98 (EDLVDTGTT) each bind 5-phospho-alpha-D-ribose 1-diphosphate. Position 69 (arginine 69) interacts with GMP. Aspartate 91 serves as a coordination point for Mg(2+). Guanine is bound by residues aspartate 94 and isoleucine 137. Xanthine-binding residues include aspartate 94 and isoleucine 137. GMP is bound by residues 94-98 (DTGTT) and 136-137 (WI).

Belongs to the purine/pyrimidine phosphoribosyltransferase family. XGPT subfamily. In terms of assembly, homotetramer. Mg(2+) serves as cofactor.

Its subcellular location is the cell inner membrane. It carries out the reaction GMP + diphosphate = guanine + 5-phospho-alpha-D-ribose 1-diphosphate. The enzyme catalyses XMP + diphosphate = xanthine + 5-phospho-alpha-D-ribose 1-diphosphate. It catalyses the reaction IMP + diphosphate = hypoxanthine + 5-phospho-alpha-D-ribose 1-diphosphate. It functions in the pathway purine metabolism; GMP biosynthesis via salvage pathway; GMP from guanine: step 1/1. It participates in purine metabolism; XMP biosynthesis via salvage pathway; XMP from xanthine: step 1/1. Purine salvage pathway enzyme that catalyzes the transfer of the ribosyl-5-phosphate group from 5-phospho-alpha-D-ribose 1-diphosphate (PRPP) to the N9 position of the 6-oxopurines guanine and xanthine to form the corresponding ribonucleotides GMP (guanosine 5'-monophosphate) and XMP (xanthosine 5'-monophosphate), with the release of PPi. To a lesser extent, also acts on hypoxanthine. In Aeromonas hydrophila subsp. hydrophila (strain ATCC 7966 / DSM 30187 / BCRC 13018 / CCUG 14551 / JCM 1027 / KCTC 2358 / NCIMB 9240 / NCTC 8049), this protein is Xanthine-guanine phosphoribosyltransferase.